Reading from the N-terminus, the 862-residue chain is Protein JOKA2 (862 aa).

Residues 6–90 (SIVIKVKYEE…NPLRISARLN (85 aa)) enclose the PB1 domain. Residues 92–106 (GERSGRASARSSGNS) are compositionally biased toward low complexity. 3 disordered regions span residues 92 to 117 (GERS…VQPP), 194 to 234 (KGNT…ASNE), and 295 to 345 (VRNS…DSSG). The segment covering 325–345 (SASSSKVKQCNWDSPNADSSG) has biased composition (polar residues). Residues 442-492 (HKGVRCDGCGVHPITGPRFISKVKENYDLCSICFAEMGNDADYIRMDRPLT) form a ZZ-type; degenerate zinc finger. The Zn(2+) site is built by Cys447, Cys450, Cys471, and Cys474. The 50-residue stretch at 811–860 (SVDDLCGVAEWDPILEELKEMGFCDKEMNKKLLKKNNGSIKRVVMDLIAG) folds into the UBA domain. The ATG8 interacting motif (AIM) signature appears at 817 to 824 (GVAEWDPI).

As to quaternary structure, interacts (via C-terminal AIM motif) with ATG8CL.

It localises to the vacuole. The protein localises to the cytoplasmic vesicle. It is found in the autophagosome. In terms of biological role, autophagic substrate that functions as a host autophagy cargo receptor. Requires ATG8 protein expression to be recognized as an autophagic substrate. Activates ATG8CL-mediated selective autophagy, and contributes to defense against the fungal pathogen Phytophtora infestans. The sequence is that of Protein JOKA2 from Solanum tuberosum (Potato).